The primary structure comprises 95 residues: Putative defensin-like protein 252 (95 aa).

The N-terminal stretch at 1–27 (MRCVTSFVVLCILMFLVVNNVKVDVKA) is a signal peptide. 4 disulfide bridges follow: cysteine 34–cysteine 93, cysteine 45–cysteine 72, cysteine 56–cysteine 85, and cysteine 70–cysteine 87.

It belongs to the DEFL family.

It is found in the secreted. This Arabidopsis thaliana (Mouse-ear cress) protein is Putative defensin-like protein 252 (SCRL13).